The primary structure comprises 259 residues: Imidazole glycerol phosphate synthase subunit HisF (259 aa).

Residues Asp-11 and Asp-130 contribute to the active site.

It belongs to the HisA/HisF family. In terms of assembly, heterodimer of HisH and HisF.

It localises to the cytoplasm. The enzyme catalyses 5-[(5-phospho-1-deoxy-D-ribulos-1-ylimino)methylamino]-1-(5-phospho-beta-D-ribosyl)imidazole-4-carboxamide + L-glutamine = D-erythro-1-(imidazol-4-yl)glycerol 3-phosphate + 5-amino-1-(5-phospho-beta-D-ribosyl)imidazole-4-carboxamide + L-glutamate + H(+). It functions in the pathway amino-acid biosynthesis; L-histidine biosynthesis; L-histidine from 5-phospho-alpha-D-ribose 1-diphosphate: step 5/9. Functionally, IGPS catalyzes the conversion of PRFAR and glutamine to IGP, AICAR and glutamate. The HisF subunit catalyzes the cyclization activity that produces IGP and AICAR from PRFAR using the ammonia provided by the HisH subunit. In Shewanella amazonensis (strain ATCC BAA-1098 / SB2B), this protein is Imidazole glycerol phosphate synthase subunit HisF.